The following is a 338-amino-acid chain: MPACYCATSTSLENNELLYKNIRNLFSTSRSFPIEQEWMNLKSISQMKDFFSNFPGNSKANNHFLCNSPLKFEIFNNEKSVKPSNGPHLFTRCSCRCNKLLSGDYITQQQPIDASAEHSLNAKGINTYSLKNCFQRSGFIGSYEESLFSGHMPYCSSVPFEFSIEIGVISFCRCKPSLVFPPHLKINFVAYSLVGNVDNVQFPYIGRFRLRSQKSDKVMNKGYPFGYRIPSVGQLQLILRQTNGLVIKVFLVPYNVSSMVDCSKTWIRQKHYLQQLDDKSGKILSHLKFGLQLQIICTSAGHHYLYDSQRIIFVQQSLGGLYGNTKIVNETLLSESCR.

This is an uncharacterized protein from Schizosaccharomyces pombe (strain 972 / ATCC 24843) (Fission yeast).